A 594-amino-acid chain; its full sequence is MNELIKHKLELLPDSPGCYLHKDKAGTIIYVGKAKNLRNRVRSYFRGSHDTKTELLVSEIADFEFIVTGSNTEALLLEINLIQENMPKYNIKLKDDKSYPFIKITNEPFPRLLITRQIKKNDGLYFGPYPDAYTATEVKKLLDRIFPFKKCKNPVNKVCFYYHLGQCQAHTICHTDKAYWDSLVADVKQFLNGKDDKIIDDLRSKMLEASHNQEFERAAEYRDLISGIATMRTKQRVMSKDLQDRDIFGYFVDKGWMCVQVFFVRQGKLIQRDVNMFPYYNEAEEDFLTYVGQFYSDQRHLIPKEVFIPETIDETLVAAIVPARIVKPQRGEKKQLVALATKNARVSLQQKFDLLEKDLRKTSGAIEHLGQLLGIEKPVRIEAFDNSNIQGTSPVAAMVVFVDGKPSKKDYRKFKIKTVIGPDDYASMREVIYRRYSRVKHEGLQAPDLIIVDGGQGQVKAARDVIEHQLGLSIPVAGLQKNDKHQTHELLFGNPLAVVELPRNSEEFFLLHRIQDEVHRFAITFHRQVRSKNAFSSKLDHIAGLGPKRKQLLLKRFKSMTALEQASLEEIQQLGIPKTVAEALFDHLTSKSEV.

Residues 14–91 (DSPGCYLHKD…IQENMPKYNI (78 aa)) enclose the GIY-YIG domain. Positions 196–231 (DKIIDDLRSKMLEASHNQEFERAAEYRDLISGIATM) constitute a UVR domain.

Belongs to the UvrC family. As to quaternary structure, interacts with UvrB in an incision complex.

It is found in the cytoplasm. In terms of biological role, the UvrABC repair system catalyzes the recognition and processing of DNA lesions. UvrC both incises the 5' and 3' sides of the lesion. The N-terminal half is responsible for the 3' incision and the C-terminal half is responsible for the 5' incision. The polypeptide is UvrABC system protein C (Streptococcus equi subsp. equi (strain 4047)).